A 60-amino-acid chain; its full sequence is Large ribosomal subunit protein uL30 (60 aa).

It belongs to the universal ribosomal protein uL30 family. Part of the 50S ribosomal subunit.

This is Large ribosomal subunit protein uL30 from Leuconostoc mesenteroides subsp. mesenteroides (strain ATCC 8293 / DSM 20343 / BCRC 11652 / CCM 1803 / JCM 6124 / NCDO 523 / NBRC 100496 / NCIMB 8023 / NCTC 12954 / NRRL B-1118 / 37Y).